Consider the following 532-residue polypeptide: Drimenyl diphosphate synthase (532 aa).

Positions 121, 122, 152, and 154 each coordinate (2E,6E)-farnesyl diphosphate. Glu-158 contributes to the Mg(2+) binding site. 4 PFTB repeats span residues 275-317, 325-367, 428-469, and 475-518; these read PAAM…RVAG, IAAA…APNP, KRQA…SRDG, and LARA…CVLL. Asp-304 acts as the Proton donor in catalysis. Arg-502 provides a ligand contact to (2E,6E)-farnesyl diphosphate.

Belongs to the terpene cyclase/mutase family. Mg(2+) serves as cofactor. Ni(2+) is required as a cofactor. It depends on Co(2+) as a cofactor.

It carries out the reaction (2E,6E)-farnesyl diphosphate = (5S,9S,10S)-drim-7-en-11-yl diphosphate. In terms of biological role, catalyzes the cyclization of farnesyl diphosphate (FPP) to drimenyl diphosphate. This is Drimenyl diphosphate synthase from Streptantibioticus cattleyicolor (strain ATCC 35852 / DSM 46488 / JCM 4925 / NBRC 14057 / NRRL 8057) (Streptomyces cattleya).